The chain runs to 325 residues: Probable tRNA pseudouridine synthase B (325 aa).

D71 acts as the Nucleophile in catalysis. The PUA domain maps to 238–313 (LPKIYVKDSA…VAASIERVIM (76 aa)).

This sequence belongs to the pseudouridine synthase TruB family. Type 2 subfamily.

It carries out the reaction uridine(55) in tRNA = pseudouridine(55) in tRNA. Could be responsible for synthesis of pseudouridine from uracil-55 in the psi GC loop of transfer RNAs. The protein is Probable tRNA pseudouridine synthase B of Korarchaeum cryptofilum (strain OPF8).